Reading from the N-terminus, the 774-residue chain is DNA ligase (774 aa).

Residues 36 to 40 (DAVYD), 85 to 86 (SL), and glutamate 161 each bind NAD(+). The N6-AMP-lysine intermediate role is filled by lysine 163. NAD(+) contacts are provided by arginine 184, glutamate 221, lysine 341, and lysine 365. Zn(2+) is bound by residues cysteine 459, cysteine 462, cysteine 477, and cysteine 482. The BRCT domain maps to 693–774 (VQSGLLRGKT…LLEALAVTGI (82 aa)).

Belongs to the NAD-dependent DNA ligase family. LigA subfamily. Mg(2+) is required as a cofactor. The cofactor is Mn(2+).

It carries out the reaction NAD(+) + (deoxyribonucleotide)n-3'-hydroxyl + 5'-phospho-(deoxyribonucleotide)m = (deoxyribonucleotide)n+m + AMP + beta-nicotinamide D-nucleotide.. In terms of biological role, DNA ligase that catalyzes the formation of phosphodiester linkages between 5'-phosphoryl and 3'-hydroxyl groups in double-stranded DNA using NAD as a coenzyme and as the energy source for the reaction. It is essential for DNA replication and repair of damaged DNA. In Trichodesmium erythraeum (strain IMS101), this protein is DNA ligase.